Consider the following 351-residue polypeptide: Transmembrane and coiled-coil domain-containing protein 5B (351 aa).

Positions 17 to 214 (EIPKLEITKQ…WRSSIQSAKT (198 aa)) form a coiled coil. The chain crosses the membrane as a helical span at residues 292–312 (IFVVMIFFRLLGYVLFYLQYI).

The protein belongs to the TMCO5 family.

It localises to the membrane. This is Transmembrane and coiled-coil domain-containing protein 5B (TMCO5B) from Bos taurus (Bovine).